Consider the following 281-residue polypeptide: Small ribosomal subunit protein uS3 (281 aa).

The region spanning 38–106 (IRRLLSTGLE…QVQLNILEVK (69 aa)) is the KH type-2 domain. A disordered region spans residues 218–281 (APAGAERARR…VTHEPQIAES (64 aa)). Residues 238-256 (SGAAGTTVTGTDAGRAVGG) are compositionally biased toward low complexity.

The protein belongs to the universal ribosomal protein uS3 family. Part of the 30S ribosomal subunit. Forms a tight complex with proteins S10 and S14.

In terms of biological role, binds the lower part of the 30S subunit head. Binds mRNA in the 70S ribosome, positioning it for translation. The protein is Small ribosomal subunit protein uS3 of Mycobacterium leprae (strain Br4923).